A 639-amino-acid chain; its full sequence is Sperm-associated antigen 16 protein (639 aa).

Residues 146-218 (DVYSQVMLLE…GLKLHYASYE (73 aa)) are a coiled coil. Positions 280 to 333 (RESGDRAGHSCEKENSSEGPTQKSLREAREEVGYKSKLKNEKKDSEFPVDMQPD) are disordered. Composition is skewed to basic and acidic residues over residues 281 to 295 (ESGD…KENS) and 303 to 325 (SLRE…KDSE). WD repeat units follow at residues 358–397 (LHEL…VLLT), 400–439 (GHTD…CTLT), 442–481 (GHNH…CRYT), 484–523 (GHTD…CEQS), 526–565 (GHMH…PIVS), 568–608 (VGPS…HKLV), and 609–639 (GHES…RLWI).

In terms of assembly, interacts with SPAG6 and STK36. Phosphorylated by TSSK2. As to expression, expressed in testis.

It is found in the cytoplasm. The protein localises to the cytoskeleton. It localises to the cilium axoneme. The protein resides in the flagellum axoneme. Its subcellular location is the cell projection. It is found in the cilium. The protein localises to the flagellum. Its function is as follows. Necessary for sperm flagellar function. Plays a role in motile ciliogenesis. May help to recruit STK36 to the cilium or apical surface of the cell to initiate subsequent steps of construction of the central pair apparatus of motile cilia. This Mus musculus (Mouse) protein is Sperm-associated antigen 16 protein (Spag16).